A 192-amino-acid polypeptide reads, in one-letter code: Epoxyqueuosine reductase QueH (192 aa).

[4Fe-4S] cluster-binding residues include Cys-9, Cys-10, Cys-87, and Cys-90. A disulfide bridge links Cys-169 with Cys-171.

The protein belongs to the QueH family.

It carries out the reaction epoxyqueuosine(34) in tRNA + AH2 = queuosine(34) in tRNA + A + H2O. The protein operates within tRNA modification; tRNA-queuosine biosynthesis. Functionally, catalyzes the conversion of epoxyqueuosine (oQ) to queuosine (Q), which is a hypermodified base found in the wobble positions of tRNA(Asp), tRNA(Asn), tRNA(His) and tRNA(Tyr). The protein is Epoxyqueuosine reductase QueH of Thermotoga maritima (strain ATCC 43589 / DSM 3109 / JCM 10099 / NBRC 100826 / MSB8).